The chain runs to 240 residues: Ornithine decarboxylase antizyme (240 aa).

Disordered stretches follow at residues 18–45 and 69–95; these read RSEPISSSNRATKRTISSSSSSSSSSAG and DHDRASPLKEYNRKTSIDSTTTASSEF. The span at 21–33 shows a compositional bias: polar residues; it reads PISSSNRATKRTI. A compositionally biased stretch (low complexity) spans 34-43; that stretch reads SSSSSSSSSS. The segment covering 69-84 has biased composition (basic and acidic residues); sequence DHDRASPLKEYNRKTS. Polar residues predominate over residues 85–95; it reads IDSTTTASSEF.

The protein belongs to the ODC antizyme family. As to quaternary structure, interacts with ODC1 and thereby sterically blocks ODC homodimerization. Preferentially expressed in adult female midguts.

In terms of biological role, ornithine decarboxylase (ODC) antizyme protein that negatively regulates ODC activity and intracellular polyamine biosynthesis and uptake in response to increased intracellular polyamine levels. Binds to ODC monomers, inhibiting the assembly of the functional ODC homodimer, and targets the monomers for ubiquitin-independent proteolytic destruction by the 26S proteasome. The polypeptide is Ornithine decarboxylase antizyme (Oda) (Aedes aegypti (Yellowfever mosquito)).